The sequence spans 568 residues: Putative F-box protein At5g39480 (568 aa).

The F-box domain occupies 9–55; that stretch reads ACLLLTLPEDVFAVISRFLSPSDICNLILCGKSLPALVDTEKMWLVQ. The segment at 315–337 is disordered; that stretch reads TNVLGESSSSKNTTPSQSEIRVS. The segment covering 321–332 has biased composition (low complexity); it reads SSSSKNTTPSQS.

The polypeptide is Putative F-box protein At5g39480 (Arabidopsis thaliana (Mouse-ear cress)).